We begin with the raw amino-acid sequence, 138 residues long: MAPKKPGAAGPKKAQKTRRREKKNVPHGAAHIKSTFNNTIVSITDPQGNVISWASSGHVGFKGSRKSTPFAAQLAAENAARKAQEHGVKKVDVFVKGPGSGRETAIRSLQAAGLEVGAISDVTPQPHNGCRPPKRRRV.

Residues 1 to 12 (MAPKKPGAAGPK) are compositionally biased toward low complexity. Disordered regions lie at residues 1 to 27 (MAPKKPGAAGPKKAQKTRRREKKNVPH) and 119 to 138 (ISDVTPQPHNGCRPPKRRRV). The span at 13-22 (KAQKTRRREK) shows a compositional bias: basic residues.

It belongs to the universal ribosomal protein uS11 family. In terms of assembly, part of the 30S ribosomal subunit. Interacts with proteins S7 and S18. Binds to IF-3.

Functionally, located on the platform of the 30S subunit, it bridges several disparate RNA helices of the 16S rRNA. Forms part of the Shine-Dalgarno cleft in the 70S ribosome. The sequence is that of Small ribosomal subunit protein uS11 from Mycobacteroides abscessus (strain ATCC 19977 / DSM 44196 / CCUG 20993 / CIP 104536 / JCM 13569 / NCTC 13031 / TMC 1543 / L948) (Mycobacterium abscessus).